Consider the following 525-residue polypeptide: GMP synthase [glutamine-hydrolyzing] (525 aa).

The 199-residue stretch at 9–207 (RILILDFGSQ…VRDICQCEAL (199 aa)) folds into the Glutamine amidotransferase type-1 domain. The active-site Nucleophile is Cys86. Active-site residues include His181 and Glu183. One can recognise a GMPS ATP-PPase domain in the interval 208 to 400 (WTPAKIIDDA…LGLPYDMLYR (193 aa)). ATP is bound at residue 235-241 (SGGVDSS).

Homodimer.

The enzyme catalyses XMP + L-glutamine + ATP + H2O = GMP + L-glutamate + AMP + diphosphate + 2 H(+). It functions in the pathway purine metabolism; GMP biosynthesis; GMP from XMP (L-Gln route): step 1/1. In terms of biological role, catalyzes the synthesis of GMP from XMP. This chain is GMP synthase [glutamine-hydrolyzing], found in Salmonella newport (strain SL254).